A 375-amino-acid chain; its full sequence is MAQLCVALVAGEASGDILGSGLMRALKARHPQVRFIGVGGPLMEAEGMQSYFPMERLAVMGLVEVLGRLRELLKRRKALIQTLIAEKPDVFIGIDAPDFTLNIELKLRQAGIKTVHYVSPSVWAWRQKRVLKIREGCDLMLTLLPFEARFYEEQGVPVRFVGHPLADTIPLAADRQAARMALGLDAGPVVALMPGSRGGEVGRLGALFLDAAQRLVELIPGVHFVLPCANGARRAQLEQMLEGRELPLTLLDGQSHQALAACDAVLIASGTATLEAMLYKRPMVVAYRLAPLTYWILKRLVKSPYVSLPNLLAQRELVPELLQDAATSEALAQTLAPLVADGRQQTERFDEIHRTLRRDASNQAADAVLALLKDR.

Belongs to the LpxB family.

It catalyses the reaction a lipid X + a UDP-2-N,3-O-bis[(3R)-3-hydroxyacyl]-alpha-D-glucosamine = a lipid A disaccharide + UDP + H(+). It functions in the pathway bacterial outer membrane biogenesis; LPS lipid A biosynthesis. Condensation of UDP-2,3-diacylglucosamine and 2,3-diacylglucosamine-1-phosphate to form lipid A disaccharide, a precursor of lipid A, a phosphorylated glycolipid that anchors the lipopolysaccharide to the outer membrane of the cell. This is Lipid-A-disaccharide synthase from Pseudomonas putida (strain W619).